Here is a 214-residue protein sequence, read N- to C-terminus: Large ribosomal subunit protein bL25 (214 aa).

Residues 189-214 are disordered; sequence IHASRKAKADEDEAAEGEEGEEGAED. Over residues 198–214 the composition is skewed to acidic residues; the sequence is DEDEAAEGEEGEEGAED.

This sequence belongs to the bacterial ribosomal protein bL25 family. CTC subfamily. As to quaternary structure, part of the 50S ribosomal subunit; part of the 5S rRNA/L5/L18/L25 subcomplex. Contacts the 5S rRNA. Binds to the 5S rRNA independently of L5 and L18.

This is one of the proteins that binds to the 5S RNA in the ribosome where it forms part of the central protuberance. This is Large ribosomal subunit protein bL25 from Alkalilimnicola ehrlichii (strain ATCC BAA-1101 / DSM 17681 / MLHE-1).